The primary structure comprises 217 residues: Probable coenzyme A transferase subunit beta (217 aa).

Residue E50 is part of the active site.

It belongs to the 3-oxoacid CoA-transferase subunit B family. In terms of assembly, heterodimer of a subunit alpha and a subunit beta.

This Bacillus subtilis (strain 168) protein is Probable coenzyme A transferase subunit beta (yodR).